The sequence spans 458 residues: Transcription factor Atf1 (458 aa).

A bZIP domain is found at 347–410 (EEKRRNFLER…VNLKTLLLAH (64 aa)). The tract at residues 349 to 378 (KRRNFLERNRVAALKCRQRKKQWLANLQNK) is basic motif. The segment at 389 to 403 (LTATVTQLREEIVNL) is leucine-zipper.

It belongs to the bZIP family.

The protein localises to the nucleus. Functionally, transcription factor that positively regulates vegetative growth, reproduction, and osmotic stress response. The protein is Transcription factor Atf1 of Penicillium expansum (Blue mold rot fungus).